Reading from the N-terminus, the 272-residue chain is Probable protein VP2 (272 aa).

Disordered regions lie at residues 50–116 (GGSR…DFAD) and 195–272 (YSPA…SSSS). The span at 78 to 90 (APDPPAGNQPPAL) shows a compositional bias: pro residues. A compositionally biased stretch (gly residues) spans 94–108 (GDGGNESGAGGGESG). Over residues 218-230 (SKRDNKENRDRGR) the composition is skewed to basic and acidic residues. Residues 231–246 (AKARAKQKPKKRRRRA) show a composition bias toward basic residues. Residues 249–272 (ESSSSSSSKSSFNSEEGSSASSSS) show a composition bias toward low complexity.

Phosphorylated at C-terminal serines.

The polypeptide is Probable protein VP2 (Homo sapiens (Human)).